Here is a 337-residue protein sequence, read N- to C-terminus: 2-ketoarginine methyltransferase (337 aa).

Belongs to the 2-ketoarginine methyltransferase family.

It carries out the reaction 5-guanidino-2-oxopentanoate + S-adenosyl-L-methionine = (3R)-5-guanidino-3-methyl-2-oxopentanoate + S-adenosyl-L-homocysteine + H(+). It participates in antibiotic biosynthesis. In terms of biological role, S-adenosyl-L-methionine-dependent methyltransferase involved in the formation of the rare amino acid 3-methylarginine (MeArg), which is incorporated into the peptidyl nucleoside antibiotic arginomycin. Transfers the methyl group from S-adenosyl-L-methionine into 5-guanidino-2-oxopentanoate acid to yield 5-guanidino-3-methyl-2-oxopentanoate, a precursor of MeArg. This chain is 2-ketoarginine methyltransferase, found in Streptomyces arginensis.